Reading from the N-terminus, the 82-residue chain is Beta-insect depressant toxin LqqIT2 (82 aa).

Positions 1 to 21 (MKLLLLLIVSASMLIESLVNA) are cleaved as a signal peptide. The 61-residue stretch at 22 to 82 (DGYIRKRDGC…TWKSETNTCG (61 aa)) folds into the LCN-type CS-alpha/beta domain. 4 cysteine pairs are disulfide-bonded: C31/C81, C35/C56, C42/C63, and C46/C65.

This sequence belongs to the long (4 C-C) scorpion toxin superfamily. Sodium channel inhibitor family. Beta subfamily. Expressed by the venom gland.

Its subcellular location is the secreted. Its function is as follows. Depressant insect beta-toxins cause a transient contraction paralysis followed by a slow flaccid paralysis. They bind voltage-independently at site-4 of sodium channels and shift the voltage of activation toward more negative potentials thereby affecting sodium channel activation and promoting spontaneous and repetitive firing. Aside from typical beta-toxin effects, this toxin also affects the inactivation process and ion selectivity of the insect voltage-gated sodium channel. This toxin is active only on insects. Is active on the insect voltage-gated sodium channel para. In vivo, when injected intraperitoneally, it exhibits analgesic activity, increasing hot plate and tail flick withdrawal latencies in a dose-dependent fashion. This phenomenon might be partly due to an inhibitory mechanism activated by noxious stimuli. This is Beta-insect depressant toxin LqqIT2 from Leiurus quinquestriatus quinquestriatus (Egyptian scorpion).